The sequence spans 68 residues: Large ribosomal subunit protein uL29 (68 aa).

The protein belongs to the universal ribosomal protein uL29 family.

This Finegoldia magna (strain ATCC 29328 / DSM 20472 / WAL 2508) (Peptostreptococcus magnus) protein is Large ribosomal subunit protein uL29.